The chain runs to 175 residues: Interleukin-10 (175 aa).

The N-terminal stretch at 1 to 21 (MQTCCQALLLLLAACTLPAHC) is a signal peptide. Disulfide bonds link C26–C123 and C77–C129.

This sequence belongs to the IL-10 family. As to quaternary structure, homodimer. Interacts with IL10RA and IL10RB. As to expression, expressed predominantly in bursa of Fabricius and cecal tonsils with low levels in thymus, liver and lung.

The protein resides in the secreted. Major immune regulatory cytokine that acts on many cells of the immune system where it has profound anti-inflammatory functions, limiting excessive tissue disruption caused by inflammation. Mechanistically, IL10 binds to its heterotetrameric receptor comprising IL10RA and IL10RB leading to JAK1 and STAT2-mediated phosphorylation of STAT3. In turn, STAT3 translocates to the nucleus where it drives expression of anti-inflammatory mediators. Targets antigen-presenting cells (APCs) such as macrophages and monocytes and inhibits their release of pro-inflammatory cytokines including granulocyte-macrophage colony-stimulating factor /GM-CSF, granulocyte colony-stimulating factor/G-CSF, IL-1 alpha, IL-1 beta, IL-6, IL-8 and TNF-alpha. Also interferes with antigen presentation by reducing the expression of MHC-class II and co-stimulatory molecules, thereby inhibiting their ability to induce T cell activation. In addition, controls the inflammatory response of macrophages by reprogramming essential metabolic pathways including mTOR signaling. The chain is Interleukin-10 from Gallus gallus (Chicken).